The chain runs to 216 residues: Octanoyltransferase (216 aa).

In terms of domain architecture, BPL/LPL catalytic spans 29–209 (DRAGECVWLL…SFDAVFGPCP (181 aa)). Residues 68 to 75 (RGGQYTYH), 140 to 142 (AIG), and 153 to 155 (GFA) contribute to the substrate site. The active-site Acyl-thioester intermediate is the cysteine 171.

The protein belongs to the LipB family.

The protein localises to the cytoplasm. It carries out the reaction octanoyl-[ACP] + L-lysyl-[protein] = N(6)-octanoyl-L-lysyl-[protein] + holo-[ACP] + H(+). The protein operates within protein modification; protein lipoylation via endogenous pathway; protein N(6)-(lipoyl)lysine from octanoyl-[acyl-carrier-protein]: step 1/2. Functionally, catalyzes the transfer of endogenously produced octanoic acid from octanoyl-acyl-carrier-protein onto the lipoyl domains of lipoate-dependent enzymes. Lipoyl-ACP can also act as a substrate although octanoyl-ACP is likely to be the physiological substrate. The chain is Octanoyltransferase from Rhodospirillum rubrum (strain ATCC 11170 / ATH 1.1.1 / DSM 467 / LMG 4362 / NCIMB 8255 / S1).